A 44-amino-acid chain; its full sequence is Mu-conotoxin-like Cal 12.1.1e (44 aa).

Intrachain disulfides connect C3–C16, C11–C28, C18–C33, and C27–C38. Position 17 is a 6'-bromotryptophan (W17). 4-hydroxyproline is present on P23. W36 and W37 each carry 6'-bromotryptophan. A 4-hydroxyproline modification is found at P39. W43 bears the 6'-bromotryptophan mark.

In terms of tissue distribution, expressed by the venom duct.

It is found in the secreted. Functionally, mu-conotoxins block voltage-gated sodium channels. This toxin reversibly blocks voltage-gated sodium channel in cephalopods, with no alteration in the voltage dependence of sodium conductance or on the kinetics of inactivation. The sequence is that of Mu-conotoxin-like Cal 12.1.1e from Californiconus californicus (California cone).